Consider the following 521-residue polypeptide: Glucose-6-phosphate isomerase (521 aa).

The active-site Proton donor is the Glu327. Active-site residues include His358 and Lys486.

The protein belongs to the GPI family.

The protein localises to the cytoplasm. The enzyme catalyses alpha-D-glucose 6-phosphate = beta-D-fructose 6-phosphate. The protein operates within carbohydrate biosynthesis; gluconeogenesis. Its pathway is carbohydrate degradation; glycolysis; D-glyceraldehyde 3-phosphate and glycerone phosphate from D-glucose: step 2/4. In terms of biological role, catalyzes the reversible isomerization of glucose-6-phosphate to fructose-6-phosphate. The protein is Glucose-6-phosphate isomerase of Bordetella petrii (strain ATCC BAA-461 / DSM 12804 / CCUG 43448).